The chain runs to 153 residues: ORM1-like protein 1 (153 aa).

At 1-26 (MNVGVAHSEVNPNTRVMNSRGMWLTY) the chain is on the cytoplasmic side. 2 helical membrane-spanning segments follow: residues 27-46 (ALGV…FSVP) and 47-64 (VAWT…YVFL). Topologically, residues 65-100 (HAVKGTPFETPDQGKARLLTHWEQLDYGVQFTSSRK) are cytoplasmic. Residues 101 to 121 (FFTISPIILYFLASFYTKYDP) form a helical membrane-spanning segment. The Extracellular portion of the chain corresponds to 122–123 (TH). Residues 124–140 (FILNTASLLSVLIPKMP) traverse the membrane as a helical segment. At 141-153 (QLHGVRIFGINKY) the chain is on the cytoplasmic side.

The protein belongs to the ORM family. In terms of assembly, ceramide-sensitive subunit of the serine palmitoyltransferase (SPT) complex, which is also composed of SPTLC1, SPTLC2/3 and SPTSSA/B. Widely expressed. Expressed in adult and fetal heart, brain, lung, liver, skeletal muscle and kidney. Expressed in adult pancreas and placenta and in fetal spleen abd thymus. Expressed at intermediate level in pancreas, placenta and brain but low in skeletal muscle and lung.

Its subcellular location is the endoplasmic reticulum membrane. Functionally, plays an essential role in the homeostatic regulation of sphingolipid de novo biosynthesis by modulating the activity of the serine palmitoyltransferase (SPT) in response to ceramide levels. When complexed to SPT, the binding of ceramides to its N-terminus stabilizes a conformation that block SPT substrate entry, hence preventing SPT catalytic activity. Through this mechanism, maintains ceramide levels at sufficient concentrations for the production of complex sphingolipids, but which prevents the accumulation of ceramides to levels that trigger apoptosis. The protein is ORM1-like protein 1 (ORMDL1) of Homo sapiens (Human).